Here is a 299-residue protein sequence, read N- to C-terminus: Protein FAM228A (299 aa).

The segment at A135–S201 is disordered. A compositionally biased stretch (basic and acidic residues) spans K146–K159. Phosphoserine is present on S264.

Belongs to the FAM228 family.

This Mus musculus (Mouse) protein is Protein FAM228A (Fam228a).